Reading from the N-terminus, the 122-residue chain is MARIAGVNIPVNKRVEIALTYIYGICRDSAKRITKEAGIEPQVRVSDLTDAEVAQLRDIIDNNHTVEGDLRRQIAMNVKRLMDLGCYRGLRHRRGLPCRGQRTHTNARTRKGPRKPIAGKKK.

Residues 96-122 (LPCRGQRTHTNARTRKGPRKPIAGKKK) are disordered.

Belongs to the universal ribosomal protein uS13 family. As to quaternary structure, part of the 30S ribosomal subunit. Forms a loose heterodimer with protein S19. Forms two bridges to the 50S subunit in the 70S ribosome.

Located at the top of the head of the 30S subunit, it contacts several helices of the 16S rRNA. In the 70S ribosome it contacts the 23S rRNA (bridge B1a) and protein L5 of the 50S subunit (bridge B1b), connecting the 2 subunits; these bridges are implicated in subunit movement. Contacts the tRNAs in the A and P-sites. This chain is Small ribosomal subunit protein uS13, found in Magnetococcus marinus (strain ATCC BAA-1437 / JCM 17883 / MC-1).